Here is a 95-residue protein sequence, read N- to C-terminus: Small ribosomal subunit protein bS6 (95 aa).

Belongs to the bacterial ribosomal protein bS6 family.

In terms of biological role, binds together with bS18 to 16S ribosomal RNA. This chain is Small ribosomal subunit protein bS6, found in Corynebacterium kroppenstedtii (strain DSM 44385 / JCM 11950 / CIP 105744 / CCUG 35717).